We begin with the raw amino-acid sequence, 649 residues long: tRNA-guanine(15) transglycosylase (649 aa).

Aspartate 88 (nucleophile) is an active-site residue. The substrate site is built by aspartate 123 and alanine 194. The Zn(2+) site is built by cysteine 280, cysteine 282, and cysteine 285. A PUA domain is found at 573 to 648 (NYRIVIDSSV…VAATLRGGIK (76 aa)).

Belongs to the archaeosine tRNA-ribosyltransferase family. Zn(2+) serves as cofactor.

The catalysed reaction is guanosine(15) in tRNA + 7-cyano-7-deazaguanine = 7-cyano-7-carbaguanosine(15) in tRNA + guanine. It functions in the pathway tRNA modification; archaeosine-tRNA biosynthesis. In terms of biological role, exchanges the guanine residue with 7-cyano-7-deazaguanine (preQ0) at position 15 in the dihydrouridine loop (D-loop) of archaeal tRNAs. The polypeptide is tRNA-guanine(15) transglycosylase (Methanococcus maripaludis (strain C5 / ATCC BAA-1333)).